The primary structure comprises 142 residues: Small ribosomal subunit protein uS12 (142 aa).

Belongs to the universal ribosomal protein uS12 family. In terms of assembly, part of the 30S ribosomal subunit.

Functionally, with S4 and S5 plays an important role in translational accuracy. Located at the interface of the 30S and 50S subunits. This chain is Small ribosomal subunit protein uS12, found in Thermoplasma volcanium (strain ATCC 51530 / DSM 4299 / JCM 9571 / NBRC 15438 / GSS1).